Consider the following 574-residue polypeptide: MEMLSGSEMIIQSLIDQGIKYIFGYPGGAVLDIYDSLKSTKKIKHILVRHEQGATHMADGYARATGKIGVVLVTSGPGATNSITGIATAYMDSIPIVVISGQVSSSLIGYDAFQECDMIGISRPIVKHSFLVKKTEDIPITFKKAFWLASSGRPGPIVIDLPKDILNSYNKKPYIWPIEVNIRSYNPITKGHSRQIKKAIDILKLSKQPVIYAGGGVISANCHNELKELAEKLNIPVTTSLMALGAFPGNHPQNLQMLGMHGTYEANMAMHYADVILAIGVRFDDRTTNNVKKYCPNATIIHIDIDPTSISKTITAHIPIVGNAKNVLQQILVFINSNMFVKEFYCLKKWWIKIQSWKNKNSLNFDTNSDNIKPQSVIKTIWKLTKGKAFITSDVGQHQMFAALYYSFQKPRRWINSGGLGTMGFGLPAALGVKLAFPNETVICVTGDGSIQMNIQELSTAMQYELPILILNLNNKSLGMVKQWQDIIYSGRHSHSYMKSLPNFIKLAESYGHSGISINTPKELEKKLQLALEKLQNGHLVFVDIKIDASEHVYPMQIRDGGMNNMLLRKNGQK.

Glutamate 51 is a thiamine diphosphate binding site. FAD contacts are provided by residues arginine 153, 261–282, and 304–323; these read HGTYEANMAMHYADVILAIGVR and DIDPTSISKTITAHIPIVGN. A thiamine pyrophosphate binding region spans residues 397–477; the sequence is QHQMFAALYY…ILILNLNNKS (81 aa). Mg(2+) contacts are provided by aspartate 448 and asparagine 475.

The protein belongs to the TPP enzyme family. In terms of assembly, dimer of large and small chains. It depends on Mg(2+) as a cofactor. Thiamine diphosphate is required as a cofactor.

The enzyme catalyses 2 pyruvate + H(+) = (2S)-2-acetolactate + CO2. It participates in amino-acid biosynthesis; L-isoleucine biosynthesis; L-isoleucine from 2-oxobutanoate: step 1/4. It functions in the pathway amino-acid biosynthesis; L-valine biosynthesis; L-valine from pyruvate: step 1/4. This Buchnera aphidicola subsp. Schlechtendalia chinensis protein is Acetolactate synthase large subunit (ilvI).